The following is a 234-amino-acid chain: MELLLLSNSTLPGKAWLEHALPLIANQLNGRRSAVFIPFAGVTQTWDEYTDKTAEVLAPLGINVTGIHRVADPLAAIEKAEIIIVGGGNTFQLMKESRERGLLAPMADRVKRGALYIGWSAGANLACPTIRTTNDMPIVDPNGFDALDLFPLQINPHFTNALPEGHKGETREQRIRELLVVAPELTVIGLPEGNWIQVSNGQAVPGGPNTTWVFKAGEEAVALEAVIAFNPWPH.

Active-site charge relay system residues include Ser120, Asp135, and His157.

It belongs to the peptidase S51 family.

It is found in the cytoplasm. The catalysed reaction is Dipeptidase E catalyzes the hydrolysis of dipeptides Asp-|-Xaa. It does not act on peptides with N-terminal Glu, Asn or Gln, nor does it cleave isoaspartyl peptides.. Hydrolyzes dipeptides containing N-terminal aspartate residues. May play a role in allowing the cell to use peptide aspartate to spare carbon otherwise required for the synthesis of the aspartate family of amino acids. The chain is Peptidase E from Salmonella gallinarum (strain 287/91 / NCTC 13346).